The chain runs to 468 residues: ATP synthase subunit beta (468 aa).

155-162 (GGAGVGKT) provides a ligand contact to ATP.

The protein belongs to the ATPase alpha/beta chains family. In terms of assembly, F-type ATPases have 2 components, CF(1) - the catalytic core - and CF(0) - the membrane proton channel. CF(1) has five subunits: alpha(3), beta(3), gamma(1), delta(1), epsilon(1). CF(0) has three main subunits: a(1), b(2) and c(9-12). The alpha and beta chains form an alternating ring which encloses part of the gamma chain. CF(1) is attached to CF(0) by a central stalk formed by the gamma and epsilon chains, while a peripheral stalk is formed by the delta and b chains.

The protein resides in the cell membrane. It carries out the reaction ATP + H2O + 4 H(+)(in) = ADP + phosphate + 5 H(+)(out). Produces ATP from ADP in the presence of a proton gradient across the membrane. The catalytic sites are hosted primarily by the beta subunits. In Streptococcus pneumoniae (strain ATCC BAA-255 / R6), this protein is ATP synthase subunit beta.